The primary structure comprises 276 residues: Rhomboid-type serine protease 2 (276 aa).

5 helical membrane-spanning segments follow: residues 27–47, 77–97, 109–129, 132–152, and 175–195; these read LPLF…LTLV, FPFI…FTPL, TSVA…YVFV, FILH…LLLG, and WITP…SSFL. The Nucleophile role is filled by S144. The active site involves H197. The chain crosses the membrane as a helical span at residues 198–218; the sequence is LAGLLVGYGFGLGYLKFLAPP.

This sequence belongs to the peptidase S54 family.

The protein localises to the golgi apparatus membrane. Its subcellular location is the golgi apparatus. It localises to the cis-Golgi network membrane. The catalysed reaction is Cleaves type-1 transmembrane domains using a catalytic dyad composed of serine and histidine that are contributed by different transmembrane domains.. Its function is as follows. Probable rhomboid-type serine protease that catalyzes intramembrane proteolysis. The polypeptide is Rhomboid-type serine protease 2 (rbd-2) (Neurospora crassa (strain ATCC 24698 / 74-OR23-1A / CBS 708.71 / DSM 1257 / FGSC 987)).